Here is a 507-residue protein sequence, read N- to C-terminus: Probable aldehyde dehydrogenase (507 aa).

219-225 (GFGAEAG) lines the NAD(+) pocket. Catalysis depends on residues Glu-263 and Cys-302.

It belongs to the aldehyde dehydrogenase family.

The enzyme catalyses an aldehyde + NAD(+) + H2O = a carboxylate + NADH + 2 H(+). In Mycobacterium bovis (strain ATCC BAA-935 / AF2122/97), this protein is Probable aldehyde dehydrogenase.